Here is a 318-residue protein sequence, read N- to C-terminus: tRNA dimethylallyltransferase (318 aa).

Position 28–35 (28–35 (GPTGAGKS)) interacts with ATP. Residue 30 to 35 (TGAGKS) coordinates substrate. The segment at 53–56 (DSMQ) is interaction with substrate tRNA.

Belongs to the IPP transferase family. As to quaternary structure, monomer. It depends on Mg(2+) as a cofactor.

The catalysed reaction is adenosine(37) in tRNA + dimethylallyl diphosphate = N(6)-dimethylallyladenosine(37) in tRNA + diphosphate. Functionally, catalyzes the transfer of a dimethylallyl group onto the adenine at position 37 in tRNAs that read codons beginning with uridine, leading to the formation of N6-(dimethylallyl)adenosine (i(6)A). This Parafrankia sp. (strain EAN1pec) protein is tRNA dimethylallyltransferase.